A 254-amino-acid chain; its full sequence is uncharacterized protein (254 aa).

This is an uncharacterized protein from Acheta domesticus (House cricket).